A 532-amino-acid chain; its full sequence is MVGSEVLEECGEKISKKESKKRAAKLEKLLRKQEREEATSSSLSLEEEDESCSSNYGDVTTNELQSAVEGKELTDVSNLVEEIVGSEVSIRGRLHKNRLVGTKLFVILRESGFTVQCVVEETRVGANMIKFVKQLSRESVVELIGVVSHPKKPLTGTTQQVEIHVRKMYCLSRSLPNLPLVVEDAARSESDIEKSGKDGKQAARVLQDTRLNNRVLDIRTPANQAIFRIQCQVQIAFREYLQSKGFLEIHTPKLIAGSSEGGSAVFRLDYKGQPACLAQSPQLHKQMAICGDMRRVFEVGPVFRAEDSFTHRHLCEFVGLDVEMEIRMHYSEIMDLVGELFPFIFTKIEERCPKELESVRKQYPFQSLKFLPQTLRLTFAEGIQMLKEAGEEVDPLGDLNTESERKLGQLVLEKYKTEFYMLHRYPSAVRPFYTMPYENDSNYSNSFDVFIRGEEIMSGAQRIHDPELLEKRARECGIDVKTISTYIDAFRYGAPPHGGFGVGLERVVMLLCALNNIRKTSLFPRDSQRLTP.

Positions 7–41 form a coiled coil; it reads LEECGEKISKKESKKRAAKLEKLLRKQEREEATSS. Positions 31–58 are disordered; it reads RKQEREEATSSSLSLEEEDESCSSNYGD. The segment at residues 88-169 is a DNA-binding region (OB); it reads VSIRGRLHKN…QVEIHVRKMY (82 aa). Residue Glu-260 coordinates L-aspartate. Residues 282-285 are aspartate; it reads QLHK. Arg-304 is a binding site for L-aspartate. Residues 304–306, 312–314, and Glu-455 contribute to the ATP site; these read RAE and RHL. Mg(2+) contacts are provided by Glu-455 and Ser-458. L-aspartate is bound by residues Ser-458 and Arg-462. 503-506 serves as a coordination point for ATP; the sequence is GLER.

The protein belongs to the class-II aminoacyl-tRNA synthetase family. Type 2 subfamily.

It is found in the cytoplasm. Its subcellular location is the cytosol. The catalysed reaction is tRNA(Asp) + L-aspartate + ATP = L-aspartyl-tRNA(Asp) + AMP + diphosphate. Functionally, catalyzes the specific attachment of an amino acid to its cognate tRNA in a 2 step reaction: the amino acid (AA) is first activated by ATP to form AA-AMP and then transferred to the acceptor end of the tRNA. The sequence is that of Aspartate--tRNA ligase 1, cytoplasmic from Arabidopsis thaliana (Mouse-ear cress).